Consider the following 217-residue polypeptide: UPF0319 protein VP1009 (217 aa).

An N-terminal signal peptide occupies residues M1–A21.

This sequence belongs to the UPF0319 family.

The chain is UPF0319 protein VP1009 from Vibrio parahaemolyticus serotype O3:K6 (strain RIMD 2210633).